A 212-amino-acid chain; its full sequence is UPF0319 protein PBPRA2789 (212 aa).

Residues 1–21 form the signal peptide; it reads MKKILLAFTLPLVLASQTAMA.

This sequence belongs to the UPF0319 family.

This chain is UPF0319 protein PBPRA2789, found in Photobacterium profundum (strain SS9).